We begin with the raw amino-acid sequence, 273 residues long: Putative pyruvate, phosphate dikinase regulatory protein 2 (273 aa).

Residue glycine 151 to threonine 158 coordinates ADP.

The protein belongs to the pyruvate, phosphate/water dikinase regulatory protein family. PDRP subfamily.

The enzyme catalyses N(tele)-phospho-L-histidyl/L-threonyl-[pyruvate, phosphate dikinase] + ADP = N(tele)-phospho-L-histidyl/O-phospho-L-threonyl-[pyruvate, phosphate dikinase] + AMP + H(+). It catalyses the reaction N(tele)-phospho-L-histidyl/O-phospho-L-threonyl-[pyruvate, phosphate dikinase] + phosphate + H(+) = N(tele)-phospho-L-histidyl/L-threonyl-[pyruvate, phosphate dikinase] + diphosphate. Functionally, bifunctional serine/threonine kinase and phosphorylase involved in the regulation of the pyruvate, phosphate dikinase (PPDK) by catalyzing its phosphorylation/dephosphorylation. The chain is Putative pyruvate, phosphate dikinase regulatory protein 2 from Staphylococcus saprophyticus subsp. saprophyticus (strain ATCC 15305 / DSM 20229 / NCIMB 8711 / NCTC 7292 / S-41).